Here is a 378-residue protein sequence, read N- to C-terminus: UPF0754 membrane protein BCAH187_A1042 (378 aa).

A run of 2 helical transmembrane segments spans residues 1–21 and 357–377; these read MNIWLSMLTTTGLGAIIGGFT and YLGALLGGMIGIVQGLLLLFL.

The protein belongs to the UPF0754 family.

Its subcellular location is the cell membrane. The polypeptide is UPF0754 membrane protein BCAH187_A1042 (Bacillus cereus (strain AH187)).